Reading from the N-terminus, the 303-residue chain is Small ribosomal subunit protein uS2 (303 aa).

Residues alanine 267–serine 303 are disordered.

This sequence belongs to the universal ribosomal protein uS2 family.

The polypeptide is Small ribosomal subunit protein uS2 (Solibacter usitatus (strain Ellin6076)).